We begin with the raw amino-acid sequence, 444 residues long: Methylenetetrahydrofolate--tRNA-(uracil-5-)-methyltransferase TrmFO (444 aa).

10–15 (GAGLAG) contributes to the FAD binding site.

It belongs to the MnmG family. TrmFO subfamily. Requires FAD as cofactor.

Its subcellular location is the cytoplasm. The enzyme catalyses uridine(54) in tRNA + (6R)-5,10-methylene-5,6,7,8-tetrahydrofolate + NADH + H(+) = 5-methyluridine(54) in tRNA + (6S)-5,6,7,8-tetrahydrofolate + NAD(+). It carries out the reaction uridine(54) in tRNA + (6R)-5,10-methylene-5,6,7,8-tetrahydrofolate + NADPH + H(+) = 5-methyluridine(54) in tRNA + (6S)-5,6,7,8-tetrahydrofolate + NADP(+). In terms of biological role, catalyzes the folate-dependent formation of 5-methyl-uridine at position 54 (M-5-U54) in all tRNAs. This is Methylenetetrahydrofolate--tRNA-(uracil-5-)-methyltransferase TrmFO from Streptococcus equi subsp. zooepidemicus (strain H70).